The following is a 522-amino-acid chain: MEELQGYLEKDRSRQQPFLYPLLFQEYIYALAHNRGLKGSLFYEPTEVFGYDSKSSLALVKRLIIRIYQQNDFLSVVNDSNKNRFVSHHRDNFCYSHFYSQMISEGFAILVEIPFSPRLVSYFEKKEIPKSHNLRSIHSIFPFLEDKLLHLNYVSDILIPHPIHMEILVQILQCWIQDVPLLHFLRFFLHKYHNWNSFLITPKKSIFVFSKENKRLFRFLYNSYVSECEFLLVFLRKQSSYLRLTSFGFFLERRHFYVKIERLQMQHLILIVVCRDFFQGTLWSFKDPFMHYVRCQGKAVLASKGTHLLMKKWKYNFVNLWQYYFNFWYQSYRIHINQLSNYSFYFLGYLSSLLKNSSTVRNQMLENSFLIDTVTNKLETLVPVIFLIGSLXKVQFCTVSGHPISKPIWADLSDSEIIERFGRMCRNLSHYHSGSSKKQGLYRIKYILRLSCARTLARKHKSTGRTFLRRLGSGLLEEFFTEEEQVLSLILPKKIPFTFYGSHKERIWYLDIIRINDLVNHS.

Belongs to the intron maturase 2 family. MatK subfamily.

It localises to the plastid. It is found in the chloroplast. Its function is as follows. Usually encoded in the trnK tRNA gene intron. Probably assists in splicing its own and other chloroplast group II introns. The sequence is that of Maturase K from Iris tenax (Oregon iris).